A 375-amino-acid polypeptide reads, in one-letter code: Oleosin-B6 (375 aa).

The polar stretch occupies residues 1-32 (MKEEIQNETAQTQLQREGRMFSFLFPVIEVIK). Transmembrane regions (helical) follow at residues 21 to 43 (FSFLFPVIEVIKVVMASVASVVF), 55 to 75 (AVALAVSTPLFIIFSPILVPA), and 81 to 101 (LLATGLGAGTTLGVTGMGLLM). Residues 33-112 (VVMASVASVV…LIKHPGKEGA (80 aa)) are hydrophobic. 2 disordered regions span residues 144–284 (PGVG…SFLS) and 303–375 (IPGF…DESS). Positions 148–179 (KKSEGRGESKGKKGKKGKSEHGRGKHEGEGKS) are enriched in basic and acidic residues. The span at 193–210 (NNPPPAGAPPTGSPPAAP) shows a compositional bias: pro residues. 23 tandem repeats follow at residues 207 to 209 (PAA), 210 to 212 (PAA), 213 to 215 (PEA), 216 to 218 (PAA), 219 to 221 (PAA), 222 to 224 (PAA), 225 to 227 (PAA), 228 to 230 (PAA), 231 to 233 (PAA), 234 to 236 (PAA), 237 to 239 (PED), 240 to 242 (PAA), 243 to 245 (PAA), 246 to 248 (PEA), 249 to 251 (PAT), 252 to 254 (PAA), 255 to 257 (PPA), 258 to 260 (PAA), 261 to 263 (APA), 264 to 266 (PAA), 267 to 269 (PAA), 270 to 272 (PPA), and 273 to 275 (PAA). The interval 207 to 275 (PAAPAAPEAP…APAAPPAPAA (69 aa)) is 23 X 3 AA approximate tandem repeats of P-A-A. The span at 211 to 251 (AAPEAPAAPAAPAAPAAPAAPAAPAAPEDPAAPAAPEAPAT) shows a compositional bias: low complexity. Pro residues predominate over residues 252–280 (PAAPPAPAAAPAPAAPAAPPAPAAPPRPP). The segment covering 316–331 (SKGGKKSKGKGKSNGR) has biased composition (basic residues).

This sequence belongs to the oleosin family. In terms of tissue distribution, the full-length protein is found in the tapetal lipid bodies of immature anthers, the proteolytically cleaved C-terminal product is found on the coats of pollen grains. Not found in flowers, developing embryos or leaf tissue.

The protein resides in the lipid droplet. The protein localises to the membrane. Many of the major pollen coat proteins are derived from endoproteolytic cleavage of oleosin-like proteins. The sequence is that of Oleosin-B6 from Brassica napus (Rape).